The sequence spans 468 residues: uncharacterized protein (468 aa).

The interval 447 to 468 is disordered; the sequence is AVHVSNGDKPKVALPDTQLGSH.

It belongs to the mycobacterial PPE family.

This is an uncharacterized protein from Mycobacterium tuberculosis (strain ATCC 25618 / H37Rv).